The primary structure comprises 623 residues: Endoglucanase 12 (623 aa).

Over 1-73 (MYSANHWGGS…LGCVVVKRKL (73 aa)) the chain is Cytoplasmic. The chain crosses the membrane as a helical; Signal-anchor for type II membrane protein span at residues 74 to 94 (LWWVLWTLLAAFILIGLPVII). The Extracellular segment spans residues 95 to 623 (AKSIPKKKPH…TPPPPSKWKP (529 aa)). Aspartate 166 serves as the catalytic Nucleophile. 6 N-linked (GlcNAc...) asparagine glycosylation sites follow: asparagine 217, asparagine 236, asparagine 324, asparagine 345, asparagine 408, and asparagine 425. Active-site residues include histidine 513, aspartate 561, and glutamate 570.

This sequence belongs to the glycosyl hydrolase 9 (cellulase E) family. In terms of tissue distribution, ubiquitous.

Its subcellular location is the membrane. The catalysed reaction is Endohydrolysis of (1-&gt;4)-beta-D-glucosidic linkages in cellulose, lichenin and cereal beta-D-glucans.. This Oryza sativa subsp. japonica (Rice) protein is Endoglucanase 12 (GLU3).